A 619-amino-acid polypeptide reads, in one-letter code: 1-deoxy-D-xylulose-5-phosphate synthase (619 aa).

Residues His76 and 117 to 119 contribute to the thiamine diphosphate site; that span reads AHS. Asp148 is a binding site for Mg(2+). Thiamine diphosphate contacts are provided by residues 149–150, Asn177, Tyr284, and Glu366; that span reads GA. Asn177 is a binding site for Mg(2+).

Belongs to the transketolase family. DXPS subfamily. As to quaternary structure, homodimer. Mg(2+) serves as cofactor. Thiamine diphosphate is required as a cofactor.

The catalysed reaction is D-glyceraldehyde 3-phosphate + pyruvate + H(+) = 1-deoxy-D-xylulose 5-phosphate + CO2. It participates in metabolic intermediate biosynthesis; 1-deoxy-D-xylulose 5-phosphate biosynthesis; 1-deoxy-D-xylulose 5-phosphate from D-glyceraldehyde 3-phosphate and pyruvate: step 1/1. In terms of biological role, catalyzes the acyloin condensation reaction between C atoms 2 and 3 of pyruvate and glyceraldehyde 3-phosphate to yield 1-deoxy-D-xylulose-5-phosphate (DXP). This is 1-deoxy-D-xylulose-5-phosphate synthase from Azoarcus sp. (strain BH72).